The following is a 575-amino-acid chain: Amino-acid acetyltransferase, mitochondrial (575 aa).

The transit peptide at 1 to 35 (MSKLRNLNRQFISNLKTHETVTNAKRNLILSILKS) directs the protein to the mitochondrion. The region spanning 398–557 (FTLNNLVQDG…QGIPGGVNIH (160 aa)) is the N-acetyltransferase domain.

The protein belongs to the acetyltransferase family.

The protein resides in the mitochondrion. It carries out the reaction L-glutamate + acetyl-CoA = N-acetyl-L-glutamate + CoA + H(+). It functions in the pathway amino-acid biosynthesis; L-arginine biosynthesis; N(2)-acetyl-L-ornithine from L-glutamate: step 1/4. Its function is as follows. N-acetylglutamate synthase involved in arginine biosynthesis. The chain is Amino-acid acetyltransferase, mitochondrial (ARG2) from Debaryomyces hansenii (strain ATCC 36239 / CBS 767 / BCRC 21394 / JCM 1990 / NBRC 0083 / IGC 2968) (Yeast).